The sequence spans 191 residues: Ankyrin repeat domain-containing protein 22 (191 aa).

ANK repeat units lie at residues 39–68 (NGDT…DVNL), 72–100 (KERT…MPVL), 101–130 (LIGY…EVNA), and 134–163 (DGYT…DPMI).

The chain is Ankyrin repeat domain-containing protein 22 (Ankrd22) from Mus musculus (Mouse).